The following is a 218-amino-acid chain: Histidine biosynthesis bifunctional protein HisIE (218 aa).

Residues 1 to 118 (MTDLSELNFD…DAPDTGLDGT (118 aa)) form a phosphoribosyl-AMP cyclohydrolase region. The tract at residues 119–218 (LERVYATITE…SGLKGPKEVG (100 aa)) is phosphoribosyl-ATP pyrophosphohydrolase.

The protein in the N-terminal section; belongs to the PRA-CH family. It in the C-terminal section; belongs to the PRA-PH family.

It is found in the cytoplasm. The enzyme catalyses 1-(5-phospho-beta-D-ribosyl)-ATP + H2O = 1-(5-phospho-beta-D-ribosyl)-5'-AMP + diphosphate + H(+). The catalysed reaction is 1-(5-phospho-beta-D-ribosyl)-5'-AMP + H2O = 1-(5-phospho-beta-D-ribosyl)-5-[(5-phospho-beta-D-ribosylamino)methylideneamino]imidazole-4-carboxamide. It participates in amino-acid biosynthesis; L-histidine biosynthesis; L-histidine from 5-phospho-alpha-D-ribose 1-diphosphate: step 2/9. The protein operates within amino-acid biosynthesis; L-histidine biosynthesis; L-histidine from 5-phospho-alpha-D-ribose 1-diphosphate: step 3/9. The polypeptide is Histidine biosynthesis bifunctional protein HisIE (hisI) (Deinococcus radiodurans (strain ATCC 13939 / DSM 20539 / JCM 16871 / CCUG 27074 / LMG 4051 / NBRC 15346 / NCIMB 9279 / VKM B-1422 / R1)).